The following is a 289-amino-acid chain: Signal peptidase I (289 aa).

Topologically, residues 1 to 43 (MKKLTSTTTTLWDNKLFINNLKNFMQTNTESNNNKTTAQEWKS) are cytoplasmic. The chain crosses the membrane as a helical span at residues 44-64 (FILVVVIALMIRILIIESFVV). Residues 65 to 289 (PTGSMKATIL…IFRNLYSIED (225 aa)) are Periplasmic-facing. Residues Ser68 and Lys131 contribute to the active site.

The protein belongs to the peptidase S26 family.

It localises to the cell inner membrane. It catalyses the reaction Cleavage of hydrophobic, N-terminal signal or leader sequences from secreted and periplasmic proteins.. In Rickettsia bellii (strain OSU 85-389), this protein is Signal peptidase I (lepB).